A 237-amino-acid polypeptide reads, in one-letter code: Ribose-5-phosphate isomerase A (237 aa).

Residues 30-33, 87-90, and 100-103 each bind substrate; these read SGST, DGAD, and KGGG. The active-site Proton acceptor is Glu-109. Residue Lys-127 coordinates substrate.

Belongs to the ribose 5-phosphate isomerase family. In terms of assembly, homodimer.

The enzyme catalyses aldehydo-D-ribose 5-phosphate = D-ribulose 5-phosphate. Its pathway is carbohydrate degradation; pentose phosphate pathway; D-ribose 5-phosphate from D-ribulose 5-phosphate (non-oxidative stage): step 1/1. Catalyzes the reversible conversion of ribose-5-phosphate to ribulose 5-phosphate. The protein is Ribose-5-phosphate isomerase A of Synechococcus sp. (strain RCC307).